The following is a 421-amino-acid chain: RNA exonuclease 4 (421 aa).

2 disordered regions span residues 1–51 and 79–179; these read MAKA…ETKK and ENQA…QPPK. Polar residues predominate over residues 11–24; that stretch reads SPCSGSLGKTANTP. A compositionally biased stretch (basic residues) spans 25 to 36; that stretch reads KQKRKQKQRKFW. Basic and acidic residues-rich tracts occupy residues 92–107, 140–149, and 161–170; these read PKKDQKVSEKKTEESV, AAEKSDEVSK, and DTEHQGKKPQ. The region spanning 234–385 is the Exonuclease domain; sequence TVAMDCEMVG…QDAQAAMRLY (152 aa).

This sequence belongs to the REXO4 family.

It localises to the nucleus. This is RNA exonuclease 4 (rexo4) from Xenopus laevis (African clawed frog).